A 455-amino-acid polypeptide reads, in one-letter code: Serine--tRNA ligase (455 aa).

Position 252 to 254 (252 to 254) interacts with L-serine; sequence TAE. ATP-binding positions include 283-285 and Val-299; that span reads RKE. Glu-306 contacts L-serine. 370-373 contributes to the ATP binding site; that stretch reads EVVS. Thr-406 contacts L-serine.

This sequence belongs to the class-II aminoacyl-tRNA synthetase family. Type-1 seryl-tRNA synthetase subfamily. Homodimer. The tRNA molecule binds across the dimer.

Its subcellular location is the cytoplasm. It carries out the reaction tRNA(Ser) + L-serine + ATP = L-seryl-tRNA(Ser) + AMP + diphosphate + H(+). The enzyme catalyses tRNA(Sec) + L-serine + ATP = L-seryl-tRNA(Sec) + AMP + diphosphate + H(+). It participates in aminoacyl-tRNA biosynthesis; selenocysteinyl-tRNA(Sec) biosynthesis; L-seryl-tRNA(Sec) from L-serine and tRNA(Sec): step 1/1. Catalyzes the attachment of serine to tRNA(Ser). Is also able to aminoacylate tRNA(Sec) with serine, to form the misacylated tRNA L-seryl-tRNA(Sec), which will be further converted into selenocysteinyl-tRNA(Sec). This is Serine--tRNA ligase from Thermococcus gammatolerans (strain DSM 15229 / JCM 11827 / EJ3).